Here is a 915-residue protein sequence, read N- to C-terminus: MVVCGGPTVLRDLLGADTEPTWKDEEVCVVGLFGKTALAQGSWHKCSLINSLCDRHIFPLFHRAPERPSERSLFQTYYEQESRVLYVLLAGLSDTGSLLKACEELSRGVSHAEAHEWWKDEEKLYCMHLLYLFSVCHILVLVHPTCCFDITYEKLFRALDSLRQKMLPSLKPSLKDCAVGLDWKLNARPCPPRLLFIFQLNGALKVEPKSQGPQTNEKPKKHSPKRRLQHALEDQIYRIFRKSRVLTNQSINCLFTVPANQAFVYIVADEDEDPVNMLLEGLRHNCTLKDTESLVPISGPRRYQMMRHTRQLSFTVENNTSLSGQLVDCTLREFLFQHVELVLTKKGFDDSVGRNPQPSHFELPTYQKWVSVALKLYEIIIENKDDDPPAFPGGFPPKLLANMKVLEGYLDADTKFSENRCQKALPMAHSAYQSNLPHNYTTTVHKNQLAQALRVYSQHARGPAFHKYAMVLNEDCYKFWSSGHQLCEERSLTDQHCVHKFHLLPKSGEKIEPERNPPILFHNSRARSTGSCNCGKKQAPREDPFDIKSANYDFYQILEEKCCGKLDHITFPIFQPSTPDPAPAKNEASPAAHDGEVEGEKMKDKEPQTQGESTSLSLALSLGQSTDSLGTFPEGPKAGGDNTEASGHGTDEKVEKRPSLVDRQASTVEYLPGMVHLNSPKGLLPKFSSWALVKLGPAKSYNFHTGLDHLGFIPGTSYLMPWDIVIRTKPEDESDLDTNSWPAPNKSIPGKRNSVVMGRGRRRDDIARAFVGFEYEDSRGRRFMCSGPDKIMKAIGNGPKESAIKALNTDMPLYMLSPSQGRGLKPHYAQLMRLFVVVPDAPVQIILAPQVQPGPPPCPVFVPEKQEITLPSDGLWVLRFPFSYASERGPCYSPKENQQLPSYKVMKGILRTVTQ.

Disordered stretches follow at residues 207–228, 520–541, 574–661, and 733–755; these read EPKS…KRRL, LFHN…QAPR, FQPS…PSLV, and ESDL…RNSV. Residues 219 to 228 are compositionally biased toward basic residues; sequence PKKHSPKRRL. Over residues 593–607 the composition is skewed to basic and acidic residues; that stretch reads HDGEVEGEKMKDKEP. Polar residues predominate over residues 608 to 629; that stretch reads QTQGESTSLSLALSLGQSTDSL. The span at 649–660 shows a compositional bias: basic and acidic residues; sequence GTDEKVEKRPSL.

The protein belongs to the SMG8 family. In terms of assembly, component of the SMG1C complex composed of smg1, smg8 and smg9.

Involved in nonsense-mediated decay (NMD) of mRNAs containing premature stop codons. Is recruited by release factors to stalled ribosomes together with smg1 and smg9 (forming the SMG1C protein kinase complex) and, in the SMG1C complex, is required to mediate the recruitment of smg1 to the ribosome:SURF complex and to suppress smg1 kinase activity until the ribosome:SURF complex locates the exon junction complex (EJC). Acts as a regulator of kinase activity. In Xenopus tropicalis (Western clawed frog), this protein is Nonsense-mediated mRNA decay factor SMG8 (smg8).